The following is a 267-amino-acid chain: uncharacterized protein (267 aa).

A disordered region spans residues 58–90 (RHTDDKQEKNQNEGEDNQKGENKTTDQQDGPKK). A run of 2 helical transmembrane segments spans residues 101–121 (IYVL…LSQM) and 226–246 (GMTT…AWLG).

Its subcellular location is the membrane. This is an uncharacterized protein from Caenorhabditis elegans.